The primary structure comprises 995 residues: Probable copper-transporting ATPase HMA5 (995 aa).

The Cytoplasmic portion of the chain corresponds to 1–299 (MATKLLSLTC…QGEIKQYYKS (299 aa)). 2 HMA domains span residues 51–117 (SRAV…FEAS) and 129–195 (QVCR…FEAV). Residues C62, C65, C140, and C143 each contribute to the Cu(+) site. The HMA 3; degenerate domain maps to 204 to 270 (SKIDLKIDGE…VIESTVFGHS (67 aa)). Residues 300-321 (FLWSLVFTVPVFLTAMVFMYIP) traverse the membrane as a helical segment. The Extracellular portion of the chain corresponds to 322–340 (GIKDLLMFKVINMLTVGEI). The helical transmembrane segment at 341-360 (IRCVLATPVQFVIGWRFYTG) threads the bilayer. Over 361–367 (SYKALRR) the chain is Cytoplasmic. Residues 368–388 (GSANMDVLIALGTNAAYFYSL) form a helical membrane-spanning segment. Topologically, residues 389 to 406 (YTVLRAATSPDFKGVDFF) are extracellular. A helical membrane pass occupies residues 407-427 (ETSAMLISFIILGKYLEVMAK). Over 428–561 (GKTSQAIAKL…KAPVQKLADR (134 aa)) the chain is Cytoplasmic. Residues 562–584 (ISKFFVPLVIFLSFSTWLAWFLA) form a helical membrane-spanning segment. Residues 585–605 (GKLHWYPESWIPSSMDSFELA) lie on the Extracellular side of the membrane. Residues 606–623 (LQFGISVMVIACPCALGL) traverse the membrane as a helical segment. Over 624–920 (ATPTAVMVGT…DLSRKTFSRI (297 aa)) the chain is Cytoplasmic. The 4-aspartylphosphate intermediate role is filled by D661. Residues D866 and D870 each contribute to the Mg(2+) site. A helical membrane pass occupies residues 921–940 (RLNYVWALGYNLMGIPIAAG). Over 941-952 (VLFPGTRFRLPP) the chain is Extracellular. The chain crosses the membrane as a helical span at residues 953–971 (WIAGAAMAASSVSVVCCSL). At 972–995 (LLKNYKRPKKLDHLEIREIQVERV) the chain is on the cytoplasmic side.

Belongs to the cation transport ATPase (P-type) (TC 3.A.3) family. Type IB subfamily. Interacts with ATX1. As to expression, expressed in roots and flowers.

The protein resides in the membrane. It catalyses the reaction Cu(+)(in) + ATP + H2O = Cu(+)(out) + ADP + phosphate + H(+). Involved in copper import into the cell. May play a role in copper detoxification in roots. This chain is Probable copper-transporting ATPase HMA5 (HMA5), found in Arabidopsis thaliana (Mouse-ear cress).